Reading from the N-terminus, the 194-residue chain is Imidazoleglycerol-phosphate dehydratase (194 aa).

This sequence belongs to the imidazoleglycerol-phosphate dehydratase family.

Its subcellular location is the cytoplasm. It carries out the reaction D-erythro-1-(imidazol-4-yl)glycerol 3-phosphate = 3-(imidazol-4-yl)-2-oxopropyl phosphate + H2O. The protein operates within amino-acid biosynthesis; L-histidine biosynthesis; L-histidine from 5-phospho-alpha-D-ribose 1-diphosphate: step 6/9. This is Imidazoleglycerol-phosphate dehydratase from Sulfurisphaera tokodaii (strain DSM 16993 / JCM 10545 / NBRC 100140 / 7) (Sulfolobus tokodaii).